Here is a 473-residue protein sequence, read N- to C-terminus: Phosphatidylserine synthase 2 (473 aa).

The segment at Met1–Thr25 is disordered. The Cytoplasmic segment spans residues Met1–Arg40. A phosphoserine mark is found at Ser12, Ser14, and Ser16. A helical membrane pass occupies residues Ala41 to Glu61. At Glu62 to Gly74 the chain is on the lumenal side. Residues Ile75 to Phe95 traverse the membrane as a helical segment. At Ser96–Arg104 the chain is on the cytoplasmic side. A helical transmembrane segment spans residues Phe105–Val125. Over Gln126–Arg291 the chain is Lumenal. N-linked (GlcNAc...) asparagine glycosylation is present at Asn159. Residues Trp292–Leu312 form a helical membrane-spanning segment. A topological domain (cytoplasmic) is located at residue Lys313. A helical transmembrane segment spans residues Phe314–Asn334. Topologically, residues Val335–Arg354 are lumenal. A helical transmembrane segment spans residues Lys355 to Val375. At Lys376–Thr381 the chain is on the cytoplasmic side. The chain crosses the membrane as a helical span at residues Leu382–Leu402. Residues Thr403–Ser473 are Lumenal-facing. Positions Arg422–Ser473 are disordered.

Belongs to the phosphatidyl serine synthase family. As to expression, highly expressed in testis. Detected at lower levels in kidney and heart.

The protein resides in the endoplasmic reticulum membrane. Its subcellular location is the membrane. The enzyme catalyses a 1,2-diacyl-sn-glycero-3-phosphoethanolamine + L-serine = a 1,2-diacyl-sn-glycero-3-phospho-L-serine + ethanolamine. It catalyses the reaction 1-hexadecanoyl-2-(9Z-octadecenoyl)-sn-glycero-3-phosphoethanolamine + L-serine = 1-hexadecanoyl-2-(9Z-octadecenoyl)-sn-glycero-3-phospho-L-serine + ethanolamine. The catalysed reaction is 1-hexadecanoyl-2-(4Z,7Z,10Z,13Z,16Z,19Z-docosahexaenoyl)-sn-glycero-3-phosphoethanolamine + L-serine = 1-hexadecanoyl-2-(4Z,7Z,10Z,13Z,16Z,19Z-docosahexaenoyl)-sn-glycero-3-phosphoserine + ethanolamine. It carries out the reaction 1-octadecanoyl-2-(5Z,8Z,11Z,14Z)-eicosatetraenoyl-sn-glycero-3-phosphoethanolamine + L-serine = 1-octadecanoyl-2-(5Z,8Z,11Z,14Z)-eicosatetraenoyl-sn-glycero-3-phosphoserine + ethanolamine. The enzyme catalyses 1-octadecanoyl-2-(4Z,7Z,10Z,13Z,16Z,19Z-docosahexaenoyl)-sn-glycero-3-phosphoethanolamine + L-serine = 1-octadecanoyl-2-(4Z,7Z,10Z,13Z,16Z,19Z-docosahexaenoyl)-sn-glycero-3-phosphoserine + ethanolamine. It catalyses the reaction 1-(1Z-octadecenyl)-2-(4Z,7Z,10Z,13Z,16Z,19Z-docosahexaenoyl)-sn-glycero-3-phosphoethanolamine + L-serine = 1-(1Z-octadecenyl)-2-(4Z,7Z,10Z,13Z,16Z,19Z-docosahexaenoyl)-sn-glycero-3-phospho-L-serine + ethanolamine. The catalysed reaction is 1-octadecanoyl-2-(9Z-octadecenoyl)-sn-glycero-3-phosphoethanolamine + L-serine = 1-octadecanoyl-2-(9Z-octadecenoyl)-sn-glycero-3-phospho-L-serine + ethanolamine. It carries out the reaction 1-(1Z-octadecenyl)-2-(9Z-octadecenoyl)-sn-glycero-3-phosphoethanolamine + L-serine = 1-(1Z-octadecenyl)-2-(9Z-octadecenoyl)-sn-glycero-3-phospho-L-serine + ethanolamine. The enzyme catalyses 1-(1Z-octadecenyl)-2-(5Z,8Z,11Z,14Z- eicosatetraenoyl)-sn-glycero-3-phosphoethanolamine + L-serine = 1-(1Z-octadecenyl)-2-(5Z,8Z,11Z,14Z-eicosatetraenoyl)-sn-glycero-3-phospho-L-serine + ethanolamine. Its pathway is phospholipid metabolism; phosphatidylserine biosynthesis. With respect to regulation, almost complete inhibition by ethanolamine in both the mitochondria-associated membrane (MAM) and endoplasmic reticulum (ER) per se. Functionally, catalyzes a base-exchange reaction in which the polar head group of phosphatidylethanolamine (PE) or phosphatidylcholine (PC) is replaced by L-serine. Catalyzes the conversion of phosphatatidylethanolamine and does not act on phosphatidylcholine. Can utilize both phosphatidylethanolamine (PE) plasmalogen and diacyl PE as substrate and the latter is six times better utilized, indicating the importance of an ester linkage at the sn-1 position. Although it shows no sn-1 fatty acyl preference, exhibits significant preference towards docosahexaenoic acid (22:6n-3) compared with 18:1 or 20:4 at the sn-2 position. The polypeptide is Phosphatidylserine synthase 2 (Ptdss2) (Mus musculus (Mouse)).